Consider the following 104-residue polypeptide: Ig lambda-2 chain C region (104 aa).

Residues Pro6–Ser99 form the Ig-like domain. Cysteines 27 and 85 form a disulfide.

The protein is Ig lambda-2 chain C region of Rattus norvegicus (Rat).